The primary structure comprises 178 residues: PEST proteolytic signal-containing nuclear protein (178 aa).

Basic and acidic residues predominate over residues 1–15 (MADGKAGDEKPEKSQ). Positions 1–82 (MADGKAGDEK…FAIGSQTTKK (82 aa)) are disordered. The residue at position 2 (A2) is an N-acetylalanine. The span at 37-47 (SSSNGGESSSR) shows a compositional bias: low complexity. S53 is subject to Phosphoserine. K64 is modified (N6-acetyllysine). S77, S87, and S119 each carry phosphoserine. Residues 134–178 (NIGRDTPTSAGPNSFNKGKHGFSDNQKLWERNIKSHLGNVHDQDN) are disordered. Position 139 is a phosphothreonine (T139). Positions 139–149 (TPTSAGPNSFN) are enriched in polar residues. At S147 the chain carries Phosphoserine. 2 positions are modified to N6-acetyllysine: K150 and K152. Positions 160–178 (KLWERNIKSHLGNVHDQDN) are enriched in basic and acidic residues.

As to quaternary structure, interacts with UHRF2/NIRF. In terms of processing, ubiquitinated; mediated by UHRF2 and leading to its subsequent proteasomal degradation. N-terminally acetylated in a HYPK-dependent manner by the NatA acetyltransferase complex which is composed of NAA10 and NAA15.

The protein resides in the nucleus. Its function is as follows. May be involved in cell cycle regulation. This chain is PEST proteolytic signal-containing nuclear protein (PCNP), found in Homo sapiens (Human).